The sequence spans 72 residues: MSSEILDQLESKIRQAVETIQLLQLEVEELKEKNDQAQQANDALRNENEQLKVEHNNWQERLRSLLGQIDNV.

Positions 1 to 72 (MSSEILDQLE…RSLLGQIDNV (72 aa)) form a coiled coil.

Belongs to the ZapB family. In terms of assembly, homodimer. The ends of the coiled-coil dimer bind to each other, forming polymers. Interacts with FtsZ.

It localises to the cytoplasm. Its function is as follows. Non-essential, abundant cell division factor that is required for proper Z-ring formation. It is recruited early to the divisome by direct interaction with FtsZ, stimulating Z-ring assembly and thereby promoting cell division earlier in the cell cycle. Its recruitment to the Z-ring requires functional FtsA or ZipA. In Actinobacillus succinogenes (strain ATCC 55618 / DSM 22257 / CCUG 43843 / 130Z), this protein is Cell division protein ZapB.